Here is a 235-residue protein sequence, read N- to C-terminus: MRFEQPLEEGRLLRRYKRFLADIESAGGERLTIHCPNTGSMLNCMSEGCRVWFSRSNDPKRKLPGTWELSETPQGRLACVNTARANRLVEEALLAGDIAELAGFTALRREVAYGVENSRADFRLEYPTGALFIEVKSVTLGFDETAVAAFPDAVTLRGAKHLRELAALAREGIRAVQLYCVNLSGVEAVRPADEIDPAYGKALREAAQAGVEVLAYGAEVTTEGLHLARRLPVRL.

It belongs to the SfsA family.

This is Sugar fermentation stimulation protein homolog from Pseudomonas aeruginosa (strain LESB58).